We begin with the raw amino-acid sequence, 702 residues long: SAGA complex subunit NGG1 (702 aa).

The span at 1 to 10 (MPRHGRRGKL) shows a compositional bias: basic residues. 2 disordered regions span residues 1-29 (MPRHGRRGKLPKGEKLPKKEGGDNTPSKL) and 90-224 (LRKI…VKNP). Composition is skewed to basic and acidic residues over residues 11 to 22 (PKGEKLPKKEGG) and 90 to 108 (LRKIRDSKNEKQANDEKQE). The span at 109 to 125 (TSNADGQHESSTATEET) shows a compositional bias: polar residues. S134 is subject to Phosphoserine. A compositionally biased stretch (basic and acidic residues) spans 162-219 (MAKEEINEDKDLQVHRDQPREKRPFDSETENRATENENTQRPDNKKQKIDVDKMENDP). Position 407 is a phosphoserine (S407). Position 464 is a phosphothreonine (T464). A Nuclear localization signal motif is present at residues 606-618 (KRIRVPKKRKKHH). 2 disordered regions span residues 611–636 (PKKRKKHHTAASNNVNTGTTSQIAQQ) and 672–702 (NESVFKDMDQEEDEDEADVFAQNTNKDVELN). Over residues 620-636 (AASNNVNTGTTSQIAQQ) the composition is skewed to polar residues. Residues 680–689 (DQEEDEDEAD) show a composition bias toward acidic residues.

It belongs to the NGG1 family. In terms of assembly, component of the 1.8 MDa SAGA (Spt-Ada-Gcn5 acetyltransferase) complex, which is composed of 19 subunits TRA1, SPT7, TAF5, NGG1/ADA3, SGF73, SPT20/ADA5, SPT8, TAF12, TAF6, HFI1/ADA1, UBP8, GCN5, ADA2, SPT3, SGF29, TAF10, TAF9, SGF11 and SUS1. The SAGA complex is composed of 4 modules, namely the HAT (histone acetyltransferase) module (GCN5, ADA2, NGG1/ADA3 and SGF29), the DUB (deubiquitinating) module (UBP8, SGF11, SGF73 and SUS1), the core or TAF (TBP-associated factor) module (TAF5, TAF6, TAF9, TAF10 and TAF12), and the Tra1 or SPT (Suppressor of Ty) module (TRA1, HFI1/ADA1, SPT3, SPT7, SPT8 and SPT20/ADA5). The Tra1/SPT module binds activators, the core module recruits TBP (TATA-binding protein), the HAT module contains the histone H3 acetyltransferase GCN5, and the DUB module comprises the histone H2B deubiquitinase UBP8. Also identified in an altered form of SAGA, named SALSA (SAGA altered, Spt8 absent) or SLIK (SAGA-like) complex, which contains a C-terminal truncated form of SPT7 and is missing SPT8. However, it has been shown that the SAGA and SAGA-like SALSA/SLIK transcriptional coactivators are structurally and biochemically equivalent. Component of the 0.8 MDa ADA complex, a HAT complex distinct from SAGA, which at least consists of ADA2, NGG1/ADA3, AHC1, AHC2, SGF29 and GCN5. Identified in an Ada.spt complex with SPT7 and TRA1. Component of an ADA/GCN5 complex that consists of HFI1/ADA1, ADA2, NGG1/ADA3, SPT20/ADA5 and GCN5 and probably is a subcomplex of SAGA.

The protein localises to the nucleus. Functionally, component of the transcription coactivator SAGA complex. SAGA acts as a general cofactor required for essentially all RNA polymerase II transcription. At the promoters, SAGA is required for transcription pre-initiation complex (PIC) recruitment. It influences RNA polymerase II transcriptional activity through different activities such as TBP interaction (via core/TAF module) and promoter selectivity, interaction with transcription activators (via Tra1/SPT module), and chromatin modification through histone acetylation (via HAT module) and deubiquitination (via DUB module). SAGA preferentially acetylates histones H3 (to form H3K9ac, H3K14ac, H3K18ac and H3K23ac) and H2B and deubiquitinates histone H2B. SAGA interacts with DNA via upstream activating sequences (UASs). Also identified in a modified version of SAGA named SALSA or SLIK. The cleavage of SPT7 and the absence of the SPT8 subunit in SLIK neither drive any major conformational differences in its structure compared with SAGA, nor significantly affect HAT, DUB, or DNA-binding activities. Component of the ADA histone acetyltransferase complex, which preferentially acetylates nucleosomal histones H3 (to form H3K14ac and H3K18ac) and H2B. May be involved in response to DNA damage by genotoxic agents. The protein is SAGA complex subunit NGG1 (NGG1) of Saccharomyces cerevisiae (strain ATCC 204508 / S288c) (Baker's yeast).